Here is a 320-residue protein sequence, read N- to C-terminus: Cytochrome f (320 aa).

The N-terminal stretch at Met1 to Ser36 is a signal peptide. Residues Tyr37, Cys57, Cys60, and His61 each contribute to the heme site. Residues Leu286 to Leu305 form a helical membrane-spanning segment.

The protein belongs to the cytochrome f family. As to quaternary structure, the 4 large subunits of the cytochrome b6-f complex are cytochrome b6, subunit IV (17 kDa polypeptide, petD), cytochrome f and the Rieske protein, while the 4 small subunits are PetG, PetL, PetM and PetN. The complex functions as a dimer. The cofactor is heme.

The protein localises to the plastid. It is found in the chloroplast thylakoid membrane. Component of the cytochrome b6-f complex, which mediates electron transfer between photosystem II (PSII) and photosystem I (PSI), cyclic electron flow around PSI, and state transitions. This is Cytochrome f (petA) from Cyanidium caldarium (Red alga).